Reading from the N-terminus, the 241-residue chain is MNYKISLRYDGSLFYGWARQPQKRTVQGDLEEIFKSIFKINNIRIIGSGRTDKGVHAYEQTFSVKHSALKYDSHIIYQALCSRTSSDIQILEVQKVDDSFHAQYNATSKTYQYVINDYEFDLFRNNYELFVNQKINDQKILEALELFVGEHDFKSFSTSELTMTIRRINWVKIKRDTHLIIYINANGFLKNMVRMIVASCLDYAFNKISLAKIHELLIYPKKGASIKLAPACGLYLYKVYY.

D52 acts as the Nucleophile in catalysis. Y111 contributes to the substrate binding site.

It belongs to the tRNA pseudouridine synthase TruA family. Homodimer.

The enzyme catalyses uridine(38/39/40) in tRNA = pseudouridine(38/39/40) in tRNA. Its function is as follows. Formation of pseudouridine at positions 38, 39 and 40 in the anticodon stem and loop of transfer RNAs. This chain is tRNA pseudouridine synthase A, found in Ureaplasma parvum serovar 3 (strain ATCC 27815 / 27 / NCTC 11736).